We begin with the raw amino-acid sequence, 46 residues long: Esculentin-1 (46 aa).

A disulfide bond links Cys40 and Cys46.

Expressed by the skin glands.

The protein localises to the secreted. In terms of biological role, antimicrobial peptide. Stimulates insulin release by BRIN-BD11 cells in vitro. The protein is Esculentin-1 of Pelophylax saharicus (Sahara frog).